Consider the following 139-residue polypeptide: Hydrogenase maturation factor HypA (139 aa).

Residue His2 coordinates Ni(2+). The Zn(2+) site is built by Cys75, Cys78, Cys111, and Cys114.

This sequence belongs to the HypA/HybF family.

Its function is as follows. Involved in the maturation of [NiFe] hydrogenases. Required for nickel insertion into the metal center of the hydrogenase. The sequence is that of Hydrogenase maturation factor HypA from Ignicoccus hospitalis (strain KIN4/I / DSM 18386 / JCM 14125).